Consider the following 545-residue polypeptide: Leucine-rich repeat LGI family member 2 (545 aa).

Positions 1–28 are cleaved as a signal peptide; that stretch reads MALRRGGCGALGLLLLLLGAACLIPRSA. The 37-residue stretch at 29 to 65 folds into the LRRNT domain; the sequence is QVRRLARCPATCSCTKESIICVGSSWVPRIVPGDISS. N-linked (GlcNAc...) asparagine glycosylation is present at N70. 3 LRR repeats span residues 86-107, 110-131, and 134-155; these read SLQL…AFAG, HLEY…AFRG, and DLTH…VFSD. Residues 167–217 form the LRRCT domain; it reads NKFECDCKAKWLYLWLKMTNSTVSDVLCIGPPEYQEKKLNDVTSFDYECTT. An N-linked (GlcNAc...) asparagine glycan is attached at N186. EAR repeat units lie at residues 219 to 261, 265 to 307, 311 to 358, 360 to 403, 407 to 450, 452 to 494, and 498 to 540; these read DFVV…EWDH, NFRS…KYDE, KFVK…KWNS, GFYS…QWNK, KFVP…RWNS, QFVE…QWDK, and LFKK…EHII. N271 carries an N-linked (GlcNAc...) asparagine glycan. N402 carries an N-linked (GlcNAc...) asparagine glycan.

Brain, heart and placenta.

The protein localises to the secreted. Its function is as follows. Required for the development of soma-targeting inhibitory GABAergic synapses made by parvalbumin-positive basket cells. The sequence is that of Leucine-rich repeat LGI family member 2 (LGI2) from Homo sapiens (Human).